Reading from the N-terminus, the 194-residue chain is MAATAPKAGGSAPEAAASAEAPLQYSLLLQYLVGDKRQPRLLEPGSLGGIPSPAKSEEQKMIERAMESCAFKAALACVGGFVLGGAFGVFTAGIDTNVGFDPKDPYRTPTAREVLKDMGQRGMSYAKNFAIVGAMFSCTECLVESYRGKSDWKNSVISGCITGGAIGFRAGLKAGVIGCGGFAAFSAAIDYYLR.

Cystine bridges form between C69–C141 and C160–C179. 3 consecutive transmembrane segments (helical) span residues 74–94 (ALACVGGFVLGGAFGVFTAGI), 123–143 (MSYAKNFAIVGAMFSCTECLV), and 170–190 (AGLKAGVIGCGGFAAFSAAID).

The protein belongs to the Tim17/Tim22/Tim23 family. In terms of assembly, component of the TIM22 complex, whose core is composed of TIMM22, associated with peripheral protein FXC1/TIMM10B and the 70 kDa heterohexamer. In most cases, the 70 kDa complex is composed of TIMM9 and TIMM10 (TIMM10A or TIMM10B). A small fraction of the 70 kDa complex is composed of TIMM8 (TIMM8A/DDP1 or TIMM8B/DDP2) and TIMM13. The TIM22 complex also contains AGK and TIMM29. Interacts directly with TIMM9, TIMM10A and FXC1/TIMM10B. Interacts (when oxidized) with TIMM29; interaction is direct. Post-translationally, disulfide bonds promote efficient assembly of the TIM22 complex.

It is found in the mitochondrion inner membrane. In terms of biological role, essential core component of the TIM22 complex, a complex that mediates the import and insertion of multi-pass transmembrane proteins into the mitochondrial inner membrane. In the TIM22 complex, it constitutes the voltage-activated and signal-gated channel. Forms a twin-pore translocase that uses the membrane potential as external driving force in 2 voltage-dependent steps. The chain is Mitochondrial import inner membrane translocase subunit Tim22 (TIMM22) from Bos taurus (Bovine).